The following is a 100-amino-acid chain: NAD(P)H-quinone oxidoreductase subunit 4L, chloroplastic (100 aa).

3 helical membrane-spanning segments follow: residues 1–21 (MLEH…YGLV), 31–51 (MCLE…SNFF), and 63–83 (IFVI…VLAI).

The protein belongs to the complex I subunit 4L family. In terms of assembly, NDH is composed of at least 16 different subunits, 5 of which are encoded in the nucleus.

The protein localises to the plastid. The protein resides in the chloroplast thylakoid membrane. The enzyme catalyses a plastoquinone + NADH + (n+1) H(+)(in) = a plastoquinol + NAD(+) + n H(+)(out). It catalyses the reaction a plastoquinone + NADPH + (n+1) H(+)(in) = a plastoquinol + NADP(+) + n H(+)(out). Its function is as follows. NDH shuttles electrons from NAD(P)H:plastoquinone, via FMN and iron-sulfur (Fe-S) centers, to quinones in the photosynthetic chain and possibly in a chloroplast respiratory chain. The immediate electron acceptor for the enzyme in this species is believed to be plastoquinone. Couples the redox reaction to proton translocation, and thus conserves the redox energy in a proton gradient. The chain is NAD(P)H-quinone oxidoreductase subunit 4L, chloroplastic from Cryptomeria japonica (Japanese cedar).